Consider the following 221-residue polypeptide: Protein-L-isoaspartate O-methyltransferase (221 aa).

Ser64 is a catalytic residue.

The protein belongs to the methyltransferase superfamily. L-isoaspartyl/D-aspartyl protein methyltransferase family.

It is found in the cytoplasm. It catalyses the reaction [protein]-L-isoaspartate + S-adenosyl-L-methionine = [protein]-L-isoaspartate alpha-methyl ester + S-adenosyl-L-homocysteine. In terms of biological role, catalyzes the methyl esterification of L-isoaspartyl residues in peptides and proteins that result from spontaneous decomposition of normal L-aspartyl and L-asparaginyl residues. It plays a role in the repair and/or degradation of damaged proteins. The polypeptide is Protein-L-isoaspartate O-methyltransferase (Thermococcus sibiricus (strain DSM 12597 / MM 739)).